The primary structure comprises 63 residues: Conotoxin Cal12.5 (63 aa).

An N-terminal signal peptide occupies residues 1 to 21; that stretch reads MKVTCVLVVLLLLLPYGDLLG.

The protein belongs to the conotoxin O1 superfamily. Contains 4 disulfide bonds. Expressed by the venom duct.

The protein localises to the secreted. Functionally, probable neurotoxin. The protein is Conotoxin Cal12.5 of Californiconus californicus (California cone).